The primary structure comprises 379 residues: Queuine tRNA-ribosyltransferase (379 aa).

D93 (proton acceptor) is an active-site residue. Substrate-binding positions include 93-97 (DSGGF), D147, Q191, and G218. Residues 249 to 255 (GVGKPED) are RNA binding. Catalysis depends on D268, which acts as the Nucleophile. The interval 273–277 (TRNAR) is RNA binding; important for wobble base 34 recognition. Zn(2+)-binding residues include C306, C308, C311, and H337.

This sequence belongs to the queuine tRNA-ribosyltransferase family. Homodimer. Within each dimer, one monomer is responsible for RNA recognition and catalysis, while the other monomer binds to the replacement base PreQ1. Zn(2+) is required as a cofactor.

The catalysed reaction is 7-aminomethyl-7-carbaguanine + guanosine(34) in tRNA = 7-aminomethyl-7-carbaguanosine(34) in tRNA + guanine. Its pathway is tRNA modification; tRNA-queuosine biosynthesis. Catalyzes the base-exchange of a guanine (G) residue with the queuine precursor 7-aminomethyl-7-deazaguanine (PreQ1) at position 34 (anticodon wobble position) in tRNAs with GU(N) anticodons (tRNA-Asp, -Asn, -His and -Tyr). Catalysis occurs through a double-displacement mechanism. The nucleophile active site attacks the C1' of nucleotide 34 to detach the guanine base from the RNA, forming a covalent enzyme-RNA intermediate. The proton acceptor active site deprotonates the incoming PreQ1, allowing a nucleophilic attack on the C1' of the ribose to form the product. After dissociation, two additional enzymatic reactions on the tRNA convert PreQ1 to queuine (Q), resulting in the hypermodified nucleoside queuosine (7-(((4,5-cis-dihydroxy-2-cyclopenten-1-yl)amino)methyl)-7-deazaguanosine). This Actinobacillus succinogenes (strain ATCC 55618 / DSM 22257 / CCUG 43843 / 130Z) protein is Queuine tRNA-ribosyltransferase.